Reading from the N-terminus, the 433-residue chain is GTPase Obg (433 aa).

Residues 1–158 (MFVDQVKIYV…RNVILELKLL (158 aa)) enclose the Obg domain. An OBG-type G domain is found at 159 to 329 (ADVGLVGFPS…LLFAIADLLE (171 aa)). Residues 165–172 (GFPSVGKS), 190–194 (FTTLV), 212–215 (DLPG), 282–285 (NKMD), and 310–312 (SAA) each bind GTP. Residues Ser172 and Thr192 each contribute to the Mg(2+) site. The OCT domain occupies 350–428 (KYEKEELPFT…LLDYEFEFVD (79 aa)).

The protein belongs to the TRAFAC class OBG-HflX-like GTPase superfamily. OBG GTPase family. Monomer. It depends on Mg(2+) as a cofactor.

It is found in the cytoplasm. Functionally, an essential GTPase which binds GTP, GDP and possibly (p)ppGpp with moderate affinity, with high nucleotide exchange rates and a fairly low GTP hydrolysis rate. Plays a role in control of the cell cycle, stress response, ribosome biogenesis and in those bacteria that undergo differentiation, in morphogenesis control. In Geobacillus thermodenitrificans (strain NG80-2), this protein is GTPase Obg.